The chain runs to 690 residues: MKVQIVFFSITVFIFVLFLLSVESNTKIKIVPSFLENSNEIEDLYINLDSDSKSSEHTTSSSSSSNSKNKGDSSSSSSNSGSSSNSIISGDSNSKDAPTTSSDSLSPATPIPTDGLLSASTYVTFTGGKVLCENITFCPNGYMYSSDYACNYDIVQNDPATHRGDWNDGIKMFEDPLPKNTTIDQVEGISFTISGAVGCQVTSSATTLEFYIQDLLVLTNTTSRYDICTCGSCYVTFGTEVYKYNMLGYNITGENKFQIQVSVNSMCATTIGITLYYKPPTITPTPTITPTPTITPTPTITPTVTPTATPSTTPSTTPTTTPSTPTPTPTKSPYSGALSPQVKKYIIIASSITGGLLISIFSFVFIRKRLNSKRSGYTQIKDGKDIDTQQIKIGVRIGKGNFGEVYLGTWRGSQVAVKKLPAHNINENILKEFHREINLMKNLRHPNVIQFLGSCLISPDICICTEYMPRGSLYSILHNEKIKISWSLVKRMMIDAAKGIIYLHGSTPVILHRDLKSHNLLVDENWKVKVADFGLSTIEQQGATMTACGTPCWTSPEVLRSQRYTEKADVYSFGIILWECATRQDPYFGIPPFQVIFAVGREGMRPPTPKYGPPKYIQLLKDCLNENPSQRPTMEQCLEILESIETKGFDDIPVNNNNNNNSNNNENNNENNNNSDNNNNDINYSNRVIN.

Positions M1–S24 are cleaved as a signal peptide. The disordered stretch occupies residues D51–P110. The span at H57–D96 shows a compositional bias: low complexity. The segment covering A97–P107 has biased composition (polar residues). Residues N134, N180, N220, and N250 are each glycosylated (N-linked (GlcNAc...) asparagine). The interval T287–S335 is disordered. Residues P296–S323 show a composition bias toward low complexity. A helical transmembrane segment spans residues I346–I366. Positions I391–I644 constitute a Protein kinase domain. Residues I397–V405 and K418 contribute to the ATP site. Catalysis depends on D514, which acts as the Proton acceptor. The disordered stretch occupies residues F649–N690. A compositionally biased stretch (low complexity) spans N655–D681.

Belongs to the protein kinase superfamily. TKL Ser/Thr protein kinase family.

The protein resides in the membrane. It carries out the reaction L-seryl-[protein] + ATP = O-phospho-L-seryl-[protein] + ADP + H(+). The enzyme catalyses L-threonyl-[protein] + ATP = O-phospho-L-threonyl-[protein] + ADP + H(+). This chain is Probable serine/threonine-protein kinase drkB (drkB), found in Dictyostelium discoideum (Social amoeba).